A 310-amino-acid polypeptide reads, in one-letter code: Cytosolic Fe-S cluster assembly factor NUBP1 homolog (310 aa).

Residues Cys12, Cys26, Cys29, and Cys35 each coordinate [4Fe-4S] cluster. Residue 66 to 73 (GKGGVGKS) participates in ATP binding. Cys240 and Cys243 together coordinate [4Fe-4S] cluster.

This sequence belongs to the Mrp/NBP35 ATP-binding proteins family. NUBP1/NBP35 subfamily. In terms of assembly, heterotetramer of 2 NUBP1 and 2 NUBP2 chains. [4Fe-4S] cluster serves as cofactor.

The protein localises to the cytoplasm. Functionally, component of the cytosolic iron-sulfur (Fe/S) protein assembly (CIA) machinery. Required for maturation of extramitochondrial Fe-S proteins. The NUBP1-NUBP2 heterotetramer forms a Fe-S scaffold complex, mediating the de novo assembly of an Fe-S cluster and its transfer to target apoproteins. In Brugia malayi (Filarial nematode worm), this protein is Cytosolic Fe-S cluster assembly factor NUBP1 homolog.